The primary structure comprises 120 residues: Chaperonin GroEL (120 aa).

Residue Asp-23–Thr-27 coordinates ATP.

The protein belongs to the chaperonin (HSP60) family. In terms of assembly, forms a cylinder of 14 subunits composed of two heptameric rings stacked back-to-back. Interacts with the co-chaperonin GroES.

Its subcellular location is the cytoplasm. The catalysed reaction is ATP + H2O + a folded polypeptide = ADP + phosphate + an unfolded polypeptide.. Together with its co-chaperonin GroES, plays an essential role in assisting protein folding. The GroEL-GroES system forms a nano-cage that allows encapsulation of the non-native substrate proteins and provides a physical environment optimized to promote and accelerate protein folding. The sequence is that of Chaperonin GroEL from Mycobacterium malmoense.